Reading from the N-terminus, the 299-residue chain is Riboflavin transporter ImpX (299 aa).

EamA domains are found at residues 6-144 (KGAL…YLLT) and 162-294 (SLYS…SIIK). 10 helical membrane-spanning segments follow: residues 7 to 27 (GALLVCLAATMWGFDGIALTP), 34 to 54 (VPFVVFILHLLPLILMSILFG), 68 to 88 (DLFFFFCVALFGGCLGTLCIV), 101 to 121 (VVTLLQKLQPIFAIILARLLL), 129 to 149 (YLFWGFLALLGGYLLTFEFHL), 158 to 178 (LLPASLYSLLAAFSFGSATVF), 202 to 222 (IMFVIVTFTSGFGDFLVATAG), 224 to 244 (WLIFVIIALTTGSGAILLYYF), 253 to 273 (VATMCELCFPISSVVFDYLIN), and 276 to 296 (VLSPVQIASAILMIISIIKIS).

This sequence belongs to the EamA transporter family.

Its subcellular location is the cell membrane. In terms of biological role, transports riboflavin into the cell. The sequence is that of Riboflavin transporter ImpX from Fusobacterium nucleatum subsp. nucleatum (strain ATCC 23726 / VPI 4351).